A 249-amino-acid polypeptide reads, in one-letter code: Long form salivary protein D7L (249 aa).

The signal sequence occupies residues 1 to 19 (MNAVITSLVFISLVGVGYS). Disulfide bonds link Cys36/Cys66 and Cys62/Cys112. Trp49 contacts thromboxane A2. Trp52 provides a ligand contact to leukotriene C4. Tyr63 contributes to the thromboxane A2 binding site. Residues Gly136 and Lys154 each coordinate leukotriene C4. Lys154 contacts thromboxane A2. Cystine bridges form between Cys162–Cys178, Cys174–Cys221, and Cys211–Cys230.

This sequence belongs to the PBP/GOBP family.

It is found in the secreted. Functionally, modulates blood feeding of female sandflies on vertebrate species by binding and sequestering different mediators involved in the host response. Binds leukotriene C4, leukotriene D4, leukotriene E4 and U-46619, a stable analog of thromboxane A2. Does not bind histamine or serotonin. Inhibits platelet aggregation induced by low concentrations of collagen in thromboxane A2-dependent manner. This chain is Long form salivary protein D7L, found in Phlebotomus duboscqi (Sandfly).